The chain runs to 239 residues: uncharacterized protein (239 aa).

The 54-residue stretch at 13–66 (IEYLVDKLNGPSEFARKTGVTLSTITRWRKGEADPSRSNLVKIAEVTGVSIEWL) folds into the HTH cro/C1-type domain. A DNA-binding region (H-T-H motif) is located at residues 24–43 (SEFARKTGVTLSTITRWRKG).

This is an uncharacterized protein from Haemophilus influenzae (strain ATCC 51907 / DSM 11121 / KW20 / Rd).